The primary structure comprises 516 residues: MEKLTFLSLLLHFVVFIASTIPSSSFLLNDRTFERSNLPSTRAEKLIRELNLFPQQDLNVIDVADLPLTAAEGPGIVERKFVFPNILADGGPTVDDLGHHAGYYKLPKSRGASMFYFFFESRNKKDAPVVIWLTGGPGCSSELAVFYENGPFKITSNMSLAWNEYGWDQVSNLLYVDQPVGTGFSYTTDKSDIRHDETGVSNDLYDFLQAFFAEHPKLAKNDFYITGESYAGHYIPAFASRVHKGNKANEGVHINLKGFAIGNGLTDPALQYPAYPDYALEMGLITQKEHDRLEKIVPLCELSIKLCGTDGTTSCLASYLVCNSLFSGVMSHAGGVNYYDIRKKCVGSLCYDFSNMEKFLNLQSVRKSLGVGDIDFVSCSTSVYQAMLVDWMRNLEVGIPTLLEDGISLLVYAGEYDLICNWLGNSRWVNAMEWSGKTNFGAAKEVPFIVDGKEAGLLKTYEQLSFLKVRDAGHMVPMDQPKAALKMLKRWMENSLIEDATVTVAAQGGEELVAQM.

The first 22 residues, 1-22 (MEKLTFLSLLLHFVVFIASTIP), serve as a signal peptide directing secretion. Positions 23-82 (SSSFLLNDRTFERSNLPSTRAEKLIRELNLFPQQDLNVIDVADLPLTAAEGPGIVERKFV) are excised as a propeptide. 3 disulfides stabilise this stretch: C139/C379, C307/C322, and C345/C350. N157 carries an N-linked (GlcNAc...) asparagine glycan. Residue S229 is part of the active site. The active site involves D417. A substrate-binding site is contributed by C420. H474 is a catalytic residue.

The protein belongs to the peptidase S10 family. As to expression, expressed in roots, senescent leaves and flowers.

It is found in the secreted. Functionally, probable carboxypeptidase. The sequence is that of Serine carboxypeptidase-like 49 (SCPL49) from Arabidopsis thaliana (Mouse-ear cress).